Here is a 342-residue protein sequence, read N- to C-terminus: Holliday junction branch migration complex subunit RuvB (342 aa).

The large ATPase domain (RuvB-L) stretch occupies residues 1–179; sequence MTNILSPEKS…FGIPMRLNFY (179 aa). ATP is bound by residues isoleucine 18, arginine 19, glycine 60, lysine 63, threonine 64, threonine 65, 126 to 128, arginine 169, tyrosine 179, and arginine 216; that span reads EDF. Threonine 64 contributes to the Mg(2+) binding site. The segment at 180 to 250 is small ATPAse domain (RuvB-S); sequence NTEELKQVLN…ICDFGLKRLT (71 aa). Residues 253-342 form a head domain (RuvB-H) region; it reads SIGLDSNDYR…HQFNILNENE (90 aa). Arginine 289, arginine 308, and arginine 313 together coordinate DNA.

Belongs to the RuvB family. Homohexamer. Forms an RuvA(8)-RuvB(12)-Holliday junction (HJ) complex. HJ DNA is sandwiched between 2 RuvA tetramers; dsDNA enters through RuvA and exits via RuvB. An RuvB hexamer assembles on each DNA strand where it exits the tetramer. Each RuvB hexamer is contacted by two RuvA subunits (via domain III) on 2 adjacent RuvB subunits; this complex drives branch migration. In the full resolvosome a probable DNA-RuvA(4)-RuvB(12)-RuvC(2) complex forms which resolves the HJ.

Its subcellular location is the cytoplasm. The enzyme catalyses ATP + H2O = ADP + phosphate + H(+). Functionally, the RuvA-RuvB-RuvC complex processes Holliday junction (HJ) DNA during genetic recombination and DNA repair, while the RuvA-RuvB complex plays an important role in the rescue of blocked DNA replication forks via replication fork reversal (RFR). RuvA specifically binds to HJ cruciform DNA, conferring on it an open structure. The RuvB hexamer acts as an ATP-dependent pump, pulling dsDNA into and through the RuvAB complex. RuvB forms 2 homohexamers on either side of HJ DNA bound by 1 or 2 RuvA tetramers; 4 subunits per hexamer contact DNA at a time. Coordinated motions by a converter formed by DNA-disengaged RuvB subunits stimulates ATP hydrolysis and nucleotide exchange. Immobilization of the converter enables RuvB to convert the ATP-contained energy into a lever motion, pulling 2 nucleotides of DNA out of the RuvA tetramer per ATP hydrolyzed, thus driving DNA branch migration. The RuvB motors rotate together with the DNA substrate, which together with the progressing nucleotide cycle form the mechanistic basis for DNA recombination by continuous HJ branch migration. Branch migration allows RuvC to scan DNA until it finds its consensus sequence, where it cleaves and resolves cruciform DNA. This chain is Holliday junction branch migration complex subunit RuvB, found in Rickettsia typhi (strain ATCC VR-144 / Wilmington).